We begin with the raw amino-acid sequence, 299 residues long: Ribosomal RNA small subunit methyltransferase H (299 aa).

S-adenosyl-L-methionine is bound by residues G36–H38, D55, F82, D97, and Q104.

Belongs to the methyltransferase superfamily. RsmH family.

The protein localises to the cytoplasm. It catalyses the reaction cytidine(1402) in 16S rRNA + S-adenosyl-L-methionine = N(4)-methylcytidine(1402) in 16S rRNA + S-adenosyl-L-homocysteine + H(+). Its function is as follows. Specifically methylates the N4 position of cytidine in position 1402 (C1402) of 16S rRNA. This Synechococcus sp. (strain RCC307) protein is Ribosomal RNA small subunit methyltransferase H.